Here is a 577-residue protein sequence, read N- to C-terminus: F-box-like/WD repeat-containing protein TBL1X (577 aa).

The LisH domain maps to 55-87 (TSDEVNFLVYRYLQESGFSHSAFTFGIESHISQ). The F-box-like domain occupies 92–137 (GTLVPPAALISILQKGLQYVEAEISINEDGTVFDGRPIESLSLIDA). Position 153 is an N6-acetyllysine (K153). Residues 177–202 (TTSAGVSHQNPSKNREATVNGEENRA) are disordered. At S183 the chain carries Phosphoserine. WD repeat units follow at residues 230 to 269 (GHES…NGGS), 286 to 325 (PSNK…ASTL), 327 to 366 (QHKG…AKQQ), 369 to 409 (FHSA…KTFQ), 410 to 449 (GHTN…CIHD), 452 to 500 (AHNK…CTHT), 503 to 542 (KHQE…LVHS), and 544 to 576 (RGTG…LDLR). K340 is covalently cross-linked (Glycyl lysine isopeptide (Lys-Gly) (interchain with G-Cter in SUMO2)).

The protein belongs to the WD repeat EBI family. In terms of assembly, homotetramer; dimer of dimers. Component of the N-Cor repressor complex, at least composed of NCOR1, NCOR2, HDAC3, TBL1X, TBL1R, CORO2A and GPS2. Interacts with GPS2 (when sumoylated); leading to protect GPS2 against degradation by the proteasome. Component of a E3 ubiquitin ligase complex containing UBE2D1, SIAH1, CACYBP/SIP, SKP1, APC and TBL1X. Probably part of other corepressor complexes, that do not contain NCOR1 and NCOR2. Interacts with histones H2B, H3a and H4. Interacts with MECP2; recruits TBL1X to the heterochromatin foci. Interacts with USP44. Ubiquitous.

The protein localises to the nucleus. Its function is as follows. F-box-like protein involved in the recruitment of the ubiquitin/19S proteasome complex to nuclear receptor-regulated transcription units. Plays an essential role in transcription activation mediated by nuclear receptors. Probably acts as integral component of corepressor complexes that mediates the recruitment of the 19S proteasome complex, leading to the subsequent proteasomal degradation of transcription repressor complexes, thereby allowing cofactor exchange. This Homo sapiens (Human) protein is F-box-like/WD repeat-containing protein TBL1X (TBL1X).